We begin with the raw amino-acid sequence, 106 residues long: Immunoglobulin lambda constant 1 (106 aa).

The Ig-like domain occupies 7–101 (PTVTLFPPSS…EGSTVEKTVA (95 aa)). C28 and C87 form a disulfide bridge.

In terms of assembly, immunoglobulins are composed of two identical heavy chains and two identical light chains; disulfide-linked.

It is found in the secreted. Its subcellular location is the cell membrane. In terms of biological role, constant region of immunoglobulin light chains. Immunoglobulins, also known as antibodies, are membrane-bound or secreted glycoproteins produced by B lymphocytes. In the recognition phase of humoral immunity, the membrane-bound immunoglobulins serve as receptors which, upon binding of a specific antigen, trigger the clonal expansion and differentiation of B lymphocytes into immunoglobulins-secreting plasma cells. Secreted immunoglobulins mediate the effector phase of humoral immunity, which results in the elimination of bound antigens. The antigen binding site is formed by the variable domain of one heavy chain, together with that of its associated light chain. Thus, each immunoglobulin has two antigen binding sites with remarkable affinity for a particular antigen. The variable domains are assembled by a process called V-(D)-J rearrangement and can then be subjected to somatic hypermutations which, after exposure to antigen and selection, allow affinity maturation for a particular antigen. The protein is Immunoglobulin lambda constant 1 of Homo sapiens (Human).